We begin with the raw amino-acid sequence, 363 residues long: Putative aryl-alcohol dehydrogenase AAD3 (363 aa).

It belongs to the aldo/keto reductase family. Aldo/keto reductase 2 subfamily.

This Saccharomyces cerevisiae (strain ATCC 204508 / S288c) (Baker's yeast) protein is Putative aryl-alcohol dehydrogenase AAD3 (AAD3).